The sequence spans 485 residues: 1-aminocyclopropane-1-carboxylate synthase 2 (485 aa).

The substrate site is built by Glu-55 and Tyr-92. Position 278 is an N6-(pyridoxal phosphate)lysine (Lys-278). Ser-460 is subject to Phosphoserine.

Belongs to the class-I pyridoxal-phosphate-dependent aminotransferase family. As to quaternary structure, homodimer and heterodimer. In vivo, the relevance of heterodimerization with other ACS enzymes is however unsure. It depends on pyridoxal 5'-phosphate as a cofactor. Post-translationally, phosphorylated on Ser 460; phosphorylation may regulate its turnover. May be processed at its C-terminus.

It carries out the reaction S-adenosyl-L-methionine = 1-aminocyclopropane-1-carboxylate + S-methyl-5'-thioadenosine + H(+). It functions in the pathway alkene biosynthesis; ethylene biosynthesis via S-adenosyl-L-methionine; ethylene from S-adenosyl-L-methionine: step 1/2. In terms of biological role, 1-aminocyclopropane-1-carboxylate synthase (ACS) enzymes catalyze the conversion of S-adenosyl-L-methionine (SAM) into 1-aminocyclopropane-1-carboxylate (ACC), a direct precursor of ethylene. The protein is 1-aminocyclopropane-1-carboxylate synthase 2 (ACS2) of Solanum lycopersicum (Tomato).